The chain runs to 204 residues: Putative t-SNARE coiled-coil homology domain-containing protein L657 (204 aa).

2 t-SNARE coiled-coil homology domains span residues Ser-9–Val-71 and Asp-140–Thr-202. Positions Val-159–Ile-181 form a coiled coil.

In Acanthamoeba polyphaga (Amoeba), this protein is Putative t-SNARE coiled-coil homology domain-containing protein L657.